We begin with the raw amino-acid sequence, 138 residues long: Small ribosomal subunit protein bS6 (138 aa).

Positions 100–138 (SPLAKGREEDDSDSSARRARDDSDDDGDDDEDDRRASAD) are disordered. The span at 121–131 (DSDDDGDDDED) shows a compositional bias: acidic residues.

Belongs to the bacterial ribosomal protein bS6 family.

Functionally, binds together with bS18 to 16S ribosomal RNA. This chain is Small ribosomal subunit protein bS6, found in Thioalkalivibrio sulfidiphilus (strain HL-EbGR7).